The primary structure comprises 65 residues: MKILYLLFAFLFLAFLSEPGNAYKQCHKKGGHCFPKEKICIPPSSDFGKMDCRWRWKCCKKGSGK.

The signal sequence occupies residues 1–22 (MKILYLLFAFLFLAFLSEPGNA). 3 disulfide bridges follow: Cys-26-Cys-58, Cys-33-Cys-52, and Cys-40-Cys-59.

The protein belongs to the crotamine-myotoxin family. Monomer. As to expression, expressed by the venom gland.

The protein localises to the secreted. Its function is as follows. Cationic peptide that possesses multiple functions. It acts as a cell-penetrating peptide (CPP), and as a potent voltage-gated potassium channel (Kv) inhibitor. It exhibits antimicrobial activities, hind limb paralysis, and severe muscle necrosis by a non-enzymatic mechanism. This Crotalus durissus terrificus (South American rattlesnake) protein is Crotamine CRO1 (CRO1).